The sequence spans 52 residues: uncharacterized protein (52 aa).

The disordered stretch occupies residues 1–52; it reads MSLRPCLTPSSMQYSDIYIPTPTPTHHTHTPTPHPHPHTHTHTHHNPNPTLF. Residues 35 to 45 are compositionally biased toward basic residues; it reads PHPHTHTHTHH.

This is an uncharacterized protein from Saccharomyces cerevisiae (strain ATCC 204508 / S288c) (Baker's yeast).